A 428-amino-acid polypeptide reads, in one-letter code: Adenylosuccinate synthetase, chloroplastic (428 aa).

Residues 17 to 23 (GDEGKGK) and 45 to 47 (GHT) each bind GTP. The active-site Proton acceptor is aspartate 18. Mg(2+) is bound by residues aspartate 18 and glycine 45. IMP-binding positions include 18–21 (DEGK), 43–46 (NAGH), threonine 135, arginine 149, asparagine 226, threonine 241, and arginine 305. Histidine 46 acts as the Proton donor in catalysis. 301–307 (TTTGRPR) serves as a coordination point for substrate. Residues arginine 307, 333-335 (KLD), and 416-418 (GVG) contribute to the GTP site.

It belongs to the adenylosuccinate synthetase family. As to quaternary structure, homodimer. The cofactor is Mg(2+).

It localises to the plastid. Its subcellular location is the chloroplast. The enzyme catalyses IMP + L-aspartate + GTP = N(6)-(1,2-dicarboxyethyl)-AMP + GDP + phosphate + 2 H(+). It participates in purine metabolism; AMP biosynthesis via de novo pathway; AMP from IMP: step 1/2. Plays an important role in the de novo pathway and in the salvage pathway of purine nucleotide biosynthesis. Catalyzes the first committed step in the biosynthesis of AMP from IMP. The polypeptide is Adenylosuccinate synthetase, chloroplastic (Ostreococcus lucimarinus (strain CCE9901)).